The following is a 374-amino-acid chain: Acid phosphatase-like protein XcAP-1 (374 aa).

The first 17 residues, 1–17 (TTIILLIAFAAIQLSKA), serve as a signal peptide directing secretion. Val25 is a serotonin binding site. Cystine bridges form between Cys144/Cys372, Cys165/Cys219, and Cys345/Cys349. Residues Asp245, Asp249, Asn271, and Gln283 each contribute to the serotonin site.

Belongs to the histidine acid phosphatase family.

The protein localises to the secreted. Functionally, probably modulates blood feeding of fleas on vertebrate species by binding and sequestering different mediators involved in the host response. Binds biogenic amines: serotonin, adrenaline and noradrenaline. Binds leukotriene C4. Does not bind histamine, leukotriene B4, leukotriene D4, leukotriene E4, ADP, and stable analogs of thromboxane A2: U-46619 and cTXA2. This is Acid phosphatase-like protein XcAP-1 from Xenopsylla cheopis (Oriental rat flea).